We begin with the raw amino-acid sequence, 89 residues long: Teretoxin Tan22.12 (89 aa).

The N-terminal stretch at 1-22 (MKVLFTLAMIVVTLCLGQRMRR) is a signal peptide.

The protein belongs to the teretoxin C (TC) superfamily. In terms of processing, contains 4 disulfide bonds. Expressed by the venom duct.

Its subcellular location is the secreted. The chain is Teretoxin Tan22.12 from Terebra anilis (Auger snail).